Here is a 293-residue protein sequence, read N- to C-terminus: MSNRAESFLVGLVGDGVMPSLTPHMHEREGDVQGLRYLYRPIDLLELGLPGESVGELLQSAHRMGFNGLNITHPCKQLVLDHLDEIAPDARRLGAVNTVIIRDGRFTGHNTDFSGFAAALASGLPDAKLDRVVQLGAGGAGSAVAYALLTAGVRHLDLVDTDAARCAERAAELAGFFPDSSVTARTTAELPQLMPLADGLVHCTPVGMAAHPGAPLDLSLLESRHWVADIVYRPIDTELVREARAKGCEVLDGGRMAVGQAADAFRIFTGLEADADRMRAHFLELVAAEEVTA.

Shikimate contacts are provided by residues 20–22 (SLT) and threonine 72. Residue lysine 76 is the Proton acceptor of the active site. Residues asparagine 97 and aspartate 112 each contribute to the shikimate site. Residues 136–140 (GAGGA) and isoleucine 230 each bind NADP(+). Tyrosine 232 contributes to the shikimate binding site. Glycine 253 is a binding site for NADP(+).

Belongs to the shikimate dehydrogenase family. As to quaternary structure, homodimer.

It carries out the reaction shikimate + NADP(+) = 3-dehydroshikimate + NADPH + H(+). The protein operates within metabolic intermediate biosynthesis; chorismate biosynthesis; chorismate from D-erythrose 4-phosphate and phosphoenolpyruvate: step 4/7. Involved in the biosynthesis of the chorismate, which leads to the biosynthesis of aromatic amino acids. Catalyzes the reversible NADPH linked reduction of 3-dehydroshikimate (DHSA) to yield shikimate (SA). This chain is Shikimate dehydrogenase (NADP(+)), found in Arthrobacter sp. (strain FB24).